Reading from the N-terminus, the 329-residue chain is Malate dehydrogenase (329 aa).

11-17 (GAAGQIG) contacts NAD(+). Residues Arg-92 and Arg-98 each coordinate substrate. NAD(+)-binding positions include Asn-105, Gln-112, and 129 to 131 (VGN). 2 residues coordinate substrate: Asn-131 and Arg-165. The active-site Proton acceptor is the His-190.

This sequence belongs to the LDH/MDH superfamily. MDH type 2 family.

It catalyses the reaction (S)-malate + NAD(+) = oxaloacetate + NADH + H(+). Its function is as follows. Catalyzes the reversible oxidation of malate to oxaloacetate. The sequence is that of Malate dehydrogenase from Laribacter hongkongensis (strain HLHK9).